A 60-amino-acid polypeptide reads, in one-letter code: Myrmicitoxin(1)-Pr4c (60 aa).

The N-terminal stretch at 1 to 23 (MKAIIFLFAVLTVVAIIIPIISG) is a signal peptide. The propeptide occupies 24 to 33 (EPNAGPHAAS). At Q59 the chain carries Glutamine amide.

Belongs to the formicidae venom clade 2 family. Expressed by the venom gland.

It is found in the secreted. Functionally, toxin that causes a rapid and irreversible paralysis when intrathoracically injected into insects (blowflies). Does not cause spontaneous nocifensive behaviors by intraplantar injection in mice. In Pogonomyrmex rugosus (Desert harvester ant), this protein is Myrmicitoxin(1)-Pr4c.